A 116-amino-acid polypeptide reads, in one-letter code: Large ribosomal subunit protein bL19 (116 aa).

It belongs to the bacterial ribosomal protein bL19 family.

Functionally, this protein is located at the 30S-50S ribosomal subunit interface and may play a role in the structure and function of the aminoacyl-tRNA binding site. The sequence is that of Large ribosomal subunit protein bL19 from Chloroflexus aurantiacus (strain ATCC 29366 / DSM 635 / J-10-fl).